A 76-amino-acid chain; its full sequence is UPF0291 protein GWCH70_1239 (76 aa).

The tract at residues 54-76 is disordered; the sequence is VIDPNGNDVTPKKLKESQKSRLH. A compositionally biased stretch (basic and acidic residues) spans 63-76; it reads TPKKLKESQKSRLH.

It belongs to the UPF0291 family.

It localises to the cytoplasm. The protein is UPF0291 protein GWCH70_1239 of Geobacillus sp. (strain WCH70).